The primary structure comprises 273 residues: Serine acetyltransferase (273 aa).

It belongs to the transferase hexapeptide repeat family. In terms of assembly, part of the cysteine synthase complex formed at a ratio of 1 copy of this protein and 2 copies of O-acetylserine sulfhydrylase (cysK). The complex reversibly dissociates in the presence of O-acetyl-L-serine in the absence of hydrogen sulfide.

It localises to the cytoplasm. The catalysed reaction is L-serine + acetyl-CoA = O-acetyl-L-serine + CoA. It functions in the pathway amino-acid biosynthesis; L-cysteine biosynthesis; L-cysteine from L-serine: step 1/2. With respect to regulation, sensitive to feedback inhibition by L-cysteine. In Salmonella typhimurium (strain LT2 / SGSC1412 / ATCC 700720), this protein is Serine acetyltransferase (cysE).